Consider the following 337-residue polypeptide: Ketol-acid reductoisomerase (NADP(+)) (337 aa).

A KARI N-terminal Rossmann domain is found at 3-183; that stretch reads VEVFYDDDAD…GGTRAGAIRT (181 aa). Residues 26 to 29, Ser-52, Ser-54, and 84 to 87 each bind NADP(+); these read YGSQ and DTAQ. His-109 is a catalytic residue. Gly-135 provides a ligand contact to NADP(+). One can recognise a KARI C-terminal knotted domain in the interval 184–329; sequence TFTEETETDL…SKLRGMMSWV (146 aa). 4 residues coordinate Mg(2+): Asp-192, Glu-196, Glu-228, and Glu-232. A substrate-binding site is contributed by Ser-253.

This sequence belongs to the ketol-acid reductoisomerase family. Mg(2+) serves as cofactor.

The catalysed reaction is (2R)-2,3-dihydroxy-3-methylbutanoate + NADP(+) = (2S)-2-acetolactate + NADPH + H(+). It catalyses the reaction (2R,3R)-2,3-dihydroxy-3-methylpentanoate + NADP(+) = (S)-2-ethyl-2-hydroxy-3-oxobutanoate + NADPH + H(+). It participates in amino-acid biosynthesis; L-isoleucine biosynthesis; L-isoleucine from 2-oxobutanoate: step 2/4. It functions in the pathway amino-acid biosynthesis; L-valine biosynthesis; L-valine from pyruvate: step 2/4. Functionally, involved in the biosynthesis of branched-chain amino acids (BCAA). Catalyzes an alkyl-migration followed by a ketol-acid reduction of (S)-2-acetolactate (S2AL) to yield (R)-2,3-dihydroxy-isovalerate. In the isomerase reaction, S2AL is rearranged via a Mg-dependent methyl migration to produce 3-hydroxy-3-methyl-2-ketobutyrate (HMKB). In the reductase reaction, this 2-ketoacid undergoes a metal-dependent reduction by NADPH to yield (R)-2,3-dihydroxy-isovalerate. This chain is Ketol-acid reductoisomerase (NADP(+)), found in Salinispora arenicola (strain CNS-205).